An 85-amino-acid chain; its full sequence is Putative membrane protein insertion efficiency factor (85 aa).

The segment at 62–85 (KGGFDPVPLKKDKSASKHSHKHNH) is disordered.

This sequence belongs to the UPF0161 family.

It localises to the cell membrane. Functionally, could be involved in insertion of integral membrane proteins into the membrane. The sequence is that of Putative membrane protein insertion efficiency factor from Staphylococcus aureus (strain Mu3 / ATCC 700698).